The following is a 204-amino-acid chain: Recombination protein RecR (204 aa).

The segment at 63 to 78 (CRICFNVADSELCPIC) adopts a C4-type zinc-finger fold. The 96-residue stretch at 86-181 (NKICVVEQPQ…KVTRLARGLP (96 aa)) folds into the Toprim domain.

This sequence belongs to the RecR family.

May play a role in DNA repair. It seems to be involved in an RecBC-independent recombinational process of DNA repair. It may act with RecF and RecO. The sequence is that of Recombination protein RecR from Dehalococcoides mccartyi (strain ATCC BAA-2266 / KCTC 15142 / 195) (Dehalococcoides ethenogenes (strain 195)).